The following is a 313-amino-acid chain: Olfactory receptor 4E2 (313 aa).

The Extracellular portion of the chain corresponds to methionine 1 to methionine 25. A glycan (N-linked (GlcNAc...) asparagine) is linked at asparagine 5. The chain crosses the membrane as a helical span at residues leucine 26–threonine 49. At valine 50 to threonine 57 the chain is on the cytoplasmic side. A helical membrane pass occupies residues proline 58–proline 79. Over lysine 80 to glutamine 100 the chain is Extracellular. Cysteine 97 and cysteine 179 are oxidised to a cystine. A helical membrane pass occupies residues leucine 101 to tyrosine 120. Residues histidine 105 and cysteine 109 each coordinate Cu cation. Topologically, residues aspartate 121–arginine 139 are cytoplasmic. Residues valine 140 to glycine 158 traverse the membrane as a helical segment. Residues glutamine 159–threonine 195 are Extracellular-facing. A helical membrane pass occupies residues glycine 196–methionine 219. Residues valine 220 to lysine 235 lie on the Cytoplasmic side of the membrane. A helical transmembrane segment spans residues alanine 236 to tyrosine 258. At threonine 259–lysine 269 the chain is on the extracellular side. Residue arginine 260 coordinates Cu cation. Residues valine 270–leucine 289 form a helical membrane-spanning segment. At arginine 290–threonine 313 the chain is on the cytoplasmic side.

It belongs to the G-protein coupled receptor 1 family.

The protein resides in the cell membrane. With respect to regulation, copper binding enhances receptor activity in response to odorant binding. Its function is as follows. Olfactory receptor that is activated by the binding of organosulfur odorants with thioether groups such as (methylthio)methanethiol (MTMT) and bis(methylthiomethyl) disulfide. Also binds odorants cis-cyclooctene and tert-butyl mercaptan. The activity of this receptor is mediated by G proteins which activate adenylyl cyclase. In Homo sapiens (Human), this protein is Olfactory receptor 4E2.